Reading from the N-terminus, the 490-residue chain is Cytochrome P450 71A21 (490 aa).

The chain crosses the membrane as a helical span at residues 1-21 (MESMTMIILQSLIIFITILFF). Position 432 (C432) interacts with heme.

Belongs to the cytochrome P450 family. Heme is required as a cofactor.

The protein resides in the membrane. The sequence is that of Cytochrome P450 71A21 (CYP71A21) from Arabidopsis thaliana (Mouse-ear cress).